The primary structure comprises 137 residues: Small ribosomal subunit protein uS12 (137 aa).

At D102 the chain carries 3-methylthioaspartic acid.

Belongs to the universal ribosomal protein uS12 family. In terms of assembly, part of the 30S ribosomal subunit. Contacts proteins S8 and S17. May interact with IF1 in the 30S initiation complex.

Its function is as follows. With S4 and S5 plays an important role in translational accuracy. In terms of biological role, interacts with and stabilizes bases of the 16S rRNA that are involved in tRNA selection in the A site and with the mRNA backbone. Located at the interface of the 30S and 50S subunits, it traverses the body of the 30S subunit contacting proteins on the other side and probably holding the rRNA structure together. The combined cluster of proteins S8, S12 and S17 appears to hold together the shoulder and platform of the 30S subunit. This is Small ribosomal subunit protein uS12 from Phytoplasma mali (strain AT).